A 538-amino-acid chain; its full sequence is Putative cysteine ligase BshC (538 aa).

Positions isoleucine 248 to leucine 268 form a coiled coil.

This sequence belongs to the BshC family.

Involved in bacillithiol (BSH) biosynthesis. May catalyze the last step of the pathway, the addition of cysteine to glucosamine malate (GlcN-Mal) to generate BSH. The polypeptide is Putative cysteine ligase BshC (Bacillus cereus (strain ATCC 14579 / DSM 31 / CCUG 7414 / JCM 2152 / NBRC 15305 / NCIMB 9373 / NCTC 2599 / NRRL B-3711)).